Reading from the N-terminus, the 134-residue chain is Cytochrome c-550 (134 aa).

Residue Gln-1 is modified to Pyrrolidone carboxylic acid. Heme c is bound by residues Cys-15, Cys-18, His-19, and Met-100.

Post-translationally, binds 1 heme c group covalently per subunit.

Electron donor for nitrous-oxide reductase. The polypeptide is Cytochrome c-550 (Paracoccus pantotrophus (Thiosphaera pantotropha)).